Reading from the N-terminus, the 415-residue chain is Leucine-rich repeat-containing protein 34 (415 aa).

2 LRR repeats span residues T246–N272 and T274–T296.

Interacts with NPM1 and NCL.

Its subcellular location is the nucleus. The protein localises to the nucleolus. It is found in the cytoplasm. In terms of biological role, highly expressed in stem cells where it may be involved in regulation of pluripotency. In embryonic stem cells (ESCs), important for normal expression of the pluripotency regulators POU5F1/OCT4 and KLF4. Also important for expression of the ectodermal marker gene NES and the endodermal marker gene GATA4. Promotes stem cell proliferation in vitro. The sequence is that of Leucine-rich repeat-containing protein 34 (Lrrc34) from Rattus norvegicus (Rat).